The sequence spans 633 residues: Extracellular metalloproteinase 5 (633 aa).

The first 21 residues, 1–21, serve as a signal peptide directing secretion; it reads MHGLLLAAAGLLSLPLHVIAH. Positions 22–245 are excised as a propeptide; that stretch reads PQPSTNLAGR…HNVVDYVSHA (224 aa). The N-linked (GlcNAc...) asparagine glycan is linked to N286. Zn(2+) is bound at residue H428. E429 is a catalytic residue. H432 contributes to the Zn(2+) binding site. N-linked (GlcNAc...) asparagine glycans are attached at residues N592 and N621.

The protein belongs to the peptidase M36 family. Zn(2+) is required as a cofactor.

The protein localises to the secreted. Functionally, secreted metalloproteinase probably acting as a virulence factor. In Arthroderma benhamiae (Trichophyton mentagrophytes), this protein is Extracellular metalloproteinase 5 (MEP5).